Reading from the N-terminus, the 205-residue chain is Holliday junction resolvase RecU (205 aa).

The interval 1–22 (MAINYPAGTRRRTAQAKNTMRT) is disordered. 4 residues coordinate Mg(2+): T90, D92, D105, and Q124.

It belongs to the RecU family. Mg(2+) serves as cofactor.

It is found in the cytoplasm. It catalyses the reaction Endonucleolytic cleavage at a junction such as a reciprocal single-stranded crossover between two homologous DNA duplexes (Holliday junction).. Endonuclease that resolves Holliday junction intermediates in genetic recombination. Cleaves mobile four-strand junctions by introducing symmetrical nicks in paired strands. Promotes annealing of linear ssDNA with homologous dsDNA. Required for DNA repair, homologous recombination and chromosome segregation. The protein is Holliday junction resolvase RecU of Leuconostoc citreum (strain KM20).